The primary structure comprises 140 residues: MLPAAMKGLGLALLAVLLCSAPAHGLWCQDCTLTTNSSHCTPKQCQPSDTVCASVRITDPSSSRKDHSVNKMCASSCDFVKRHFFSDYLMGFINSGILKVDVDCCEKDLCNGAAGAGHSPWALAGGLLLSLGPALLWAGP.

The first 25 residues, 1–25 (MLPAAMKGLGLALLAVLLCSAPAHG), serve as a signal peptide directing secretion. The 66-residue stretch at 26 to 91 (LWCQDCTLTT…RHFFSDYLMG (66 aa)) folds into the UPAR/Ly6 domain. 5 disulfide bridges follow: Cys28-Cys52, Cys31-Cys40, Cys45-Cys73, Cys77-Cys104, and Cys105-Cys110. The N-linked (GlcNAc...) asparagine glycan is linked to Asn36. Gly115 carries the GPI-anchor amidated glycine lipid modification. A propeptide spans 116 to 140 (AGHSPWALAGGLLLSLGPALLWAGP) (removed in mature form).

As to quaternary structure, interacts with CHRNA4 and CHRNA7. As to expression, highly expressed in brain (cerebral cortex, amygdala, hippocampus and subthalamic nucleus) and in acute human leukemic cell line MOLT-3. Also found in lower levels in testis, pancreas, small intestine and colon.

The protein localises to the cell membrane. Believed to act as a modulator of nicotinic acetylcholine receptors (nAChRs) activity. In vitro inhibits alpha-3:beta-4-containing nAChRs maximum response. May play a role in the intracellular trafficking of alpha-7-containing nAChRs and may inhibit their expression at the cell surface. Seems to inhibit alpha-7/CHRNA7 signaling in hippocampal neurons. The sequence is that of Lymphocyte antigen 6H (LY6H) from Homo sapiens (Human).